A 293-amino-acid polypeptide reads, in one-letter code: Elongation factor Ts (293 aa).

The tract at residues 79–82 (TDFV) is involved in Mg(2+) ion dislocation from EF-Tu.

Belongs to the EF-Ts family.

The protein resides in the cytoplasm. Functionally, associates with the EF-Tu.GDP complex and induces the exchange of GDP to GTP. It remains bound to the aminoacyl-tRNA.EF-Tu.GTP complex up to the GTP hydrolysis stage on the ribosome. The protein is Elongation factor Ts of Bacillus pumilus (strain SAFR-032).